Consider the following 510-residue polypeptide: DNA-directed RNA polymerase I subunit RPA34 (510 aa).

The residue at position 1 (M1) is an N-acetylmethionine. The disordered stretch occupies residues 1–31; sequence MEEPQAGDAARFSCPPNFTAKPPASESPRFS. Phosphoserine is present on S27. A Phosphotyrosine modification is found at Y80. The interval 120–143 is disordered; it reads GPQQSLSGSPLQPIPASPPPQIPP. Phosphoserine occurs at positions 128, 136, 172, and 205. The segment covering 131-143 has biased composition (pro residues); it reads QPIPASPPPQIPP. The tract at residues 203 to 510 is disordered; the sequence is LGSPEMDVRK…KRKQQQQQPV (308 aa). Residues 258 to 270 are compositionally biased toward basic and acidic residues; the sequence is GKETFEPEDKTVK. A Glycyl lysine isopeptide (Lys-Gly) (interchain with G-Cter in SUMO1); alternate cross-link involves residue K270. Residue K270 forms a Glycyl lysine isopeptide (Lys-Gly) (interchain with G-Cter in SUMO2); alternate linkage. At S285 the chain carries Phosphoserine. A Phosphothreonine modification is found at T287. S309 carries the post-translational modification Phosphoserine. K314 is covalently cross-linked (Glycyl lysine isopeptide (Lys-Gly) (interchain with G-Cter in SUMO1); alternate). A Glycyl lysine isopeptide (Lys-Gly) (interchain with G-Cter in SUMO2); alternate cross-link involves residue K314. Low complexity-rich tracts occupy residues 372–382 and 394–407; these read AKPQAQAALAA and DATVEPETEVVGPE. Basic residues predominate over residues 421 to 430; that stretch reads TKKKKKKKER. The segment covering 436-452 has biased composition (low complexity); it reads EPIQPLEPELPGEGQPE. S490 is modified (phosphoserine).

It belongs to the eukaryotic RPA34 RNA polymerase subunit family. Component of the RNA polymerase I (Pol I) complex consisting of 13 subunits: a ten-subunit catalytic core composed of POLR1A/RPA1, POLR1B/RPA2, POLR1C/RPAC1, POLR1D/RPAC2, POLR1H/RPA12, POLR2E/RPABC1, POLR2F/RPABC2, POLR2H/RPABC3, POLR2K/RPABC4 and POLR2L/RPABC5; a mobile stalk subunit POLR1F/RPA43 protruding from the core and additional subunits homologous to general transcription factors POLR1E/RPA49 and POLR1G/RPA34. Forms a heterodimer with POLR1E/RPA49. Part of Pol I pre-initiation complex (PIC), in which Pol I core assembles with RRN3 and promoter-bound UTBF and SL1/TIF-IB complex. Interacts with TAF1A thereby associates with the SL1/TIF-IB complex. Interacts with UBTF. Interacts with POLR1E/PRAF1 through its N-terminal region. In terms of assembly, interacts with CD3E. In terms of processing, undergoes tyrosine phosphorylation upon T-cell receptor (TCR) stimulation. This phosphorylation has not been confirmed by other groups. Phosphorylated on tyrosine residues in initiation-competent Pol I-beta complexes but not in Pol I-alpha complexes.

It localises to the nucleus. Its subcellular location is the nucleolus. It is found in the chromosome. Component of RNA polymerase I (Pol I), a DNA-dependent RNA polymerase which synthesizes ribosomal RNA precursors using the four ribonucleoside triphosphates as substrates. Involved in UBTF-activated transcription, presumably at a step following PIC formation. Functionally, has been described as a component of preformed T-cell receptor (TCR) complex. The chain is DNA-directed RNA polymerase I subunit RPA34 from Homo sapiens (Human).